Consider the following 750-residue polypeptide: Polyribonucleotide nucleotidyltransferase (750 aa).

Positions 519 and 525 each coordinate Mg(2+). The KH domain maps to 585 to 644 (PRVIAVKIPVDKIGEVIGPKGKMINQIQEDTGADISIEDDGTVYIGATNGPSADAARSAI). Residues 656 to 728 (GERYLGTVVK…DRGKLSLSPV (73 aa)) form the S1 motif domain. Residues 725–750 (LSPVVAEEEGAASEDAPAEAAEESAE) form a disordered region. The span at 730–750 (AEEEGAASEDAPAEAAEESAE) shows a compositional bias: acidic residues.

This sequence belongs to the polyribonucleotide nucleotidyltransferase family. Mg(2+) is required as a cofactor.

It is found in the cytoplasm. The catalysed reaction is RNA(n+1) + phosphate = RNA(n) + a ribonucleoside 5'-diphosphate. In terms of biological role, involved in mRNA degradation. Catalyzes the phosphorolysis of single-stranded polyribonucleotides processively in the 3'- to 5'-direction. This is Polyribonucleotide nucleotidyltransferase from Paenarthrobacter aurescens (strain TC1).